The sequence spans 291 residues: Nucleotide-binding protein LJ_0866 (291 aa).

13–20 (GMSGAGKT) lines the ATP pocket. A GTP-binding site is contributed by 63 to 66 (DLRV).

The protein belongs to the RapZ-like family.

In terms of biological role, displays ATPase and GTPase activities. This Lactobacillus johnsonii (strain CNCM I-12250 / La1 / NCC 533) protein is Nucleotide-binding protein LJ_0866.